We begin with the raw amino-acid sequence, 265 residues long: Small ribosomal subunit protein uS3 (265 aa).

The KH type-2 domain occupies Val-39–Arg-107. Positions Asn-211–Glu-265 are disordered. A compositionally biased stretch (basic and acidic residues) spans Glu-221–Gly-239.

Belongs to the universal ribosomal protein uS3 family. In terms of assembly, part of the 30S ribosomal subunit. Forms a tight complex with proteins S10 and S14.

Its function is as follows. Binds the lower part of the 30S subunit head. Binds mRNA in the 70S ribosome, positioning it for translation. The polypeptide is Small ribosomal subunit protein uS3 (Cupriavidus metallidurans (strain ATCC 43123 / DSM 2839 / NBRC 102507 / CH34) (Ralstonia metallidurans)).